Consider the following 217-residue polypeptide: Chorionic somatomammotropin hormone 1 (217 aa).

Residues 1–26 form the signal peptide; the sequence is MAPGSRTSLLLAFALLCLPWLQEAGA. H44 lines the Zn(2+) pocket. C79 and C191 are joined by a disulfide. E200 serves as a coordination point for Zn(2+). Residues C208 and C215 are joined by a disulfide bond.

Belongs to the somatotropin/prolactin family. As to quaternary structure, can be found in a monomeric as well as dimeric form.

It localises to the secreted. Its function is as follows. Produced only during pregnancy and is involved in stimulating lactation, fetal growth and metabolism. Does not interact with GHR but only activates PRLR through zinc-induced dimerization. The sequence is that of Chorionic somatomammotropin hormone 1 (CSH1) from Homo sapiens (Human).